The following is a 144-amino-acid chain: uncharacterized protein (144 aa).

Positions 98–127 (PLADGATVDSQASENGEKEAQPTPPKEGLL) are disordered.

This is an uncharacterized protein from Aedes vexans (Inland floodwater mosquito).